The primary structure comprises 192 residues: Thioredoxin-like 3-2, chloroplastic (192 aa).

The transit peptide at M1–R55 directs the protein to the chloroplast. The Thioredoxin domain maps to L66–I191. Residues C110 and C113 each act as nucleophile in the active site. An intrachain disulfide couples C110 to C113.

It belongs to the thioredoxin family.

It is found in the plastid. It localises to the chloroplast stroma. In terms of biological role, probable thiol-disulfide oxidoreductase that may participate in various redox reactions. The protein is Thioredoxin-like 3-2, chloroplastic (WCRKC2) of Arabidopsis thaliana (Mouse-ear cress).